Here is a 459-residue protein sequence, read N- to C-terminus: Trigger factor (459 aa).

Residues 166-245 (GDFANIDLTA…VNSVKAEELP (80 aa)) enclose the PPIase FKBP-type domain.

It belongs to the FKBP-type PPIase family. Tig subfamily.

Its subcellular location is the cytoplasm. It catalyses the reaction [protein]-peptidylproline (omega=180) = [protein]-peptidylproline (omega=0). In terms of biological role, involved in protein export. Acts as a chaperone by maintaining the newly synthesized protein in an open conformation. Functions as a peptidyl-prolyl cis-trans isomerase. This chain is Trigger factor, found in Bifidobacterium longum (strain NCC 2705).